The following is a 111-amino-acid chain: Large ribosomal subunit protein uL24 (111 aa).

The protein belongs to the universal ribosomal protein uL24 family. In terms of assembly, part of the 50S ribosomal subunit.

In terms of biological role, one of two assembly initiator proteins, it binds directly to the 5'-end of the 23S rRNA, where it nucleates assembly of the 50S subunit. One of the proteins that surrounds the polypeptide exit tunnel on the outside of the subunit. The sequence is that of Large ribosomal subunit protein uL24 from Streptococcus pneumoniae (strain Hungary19A-6).